A 359-amino-acid chain; its full sequence is Decorin (359 aa).

Positions 1–16 are cleaved as a signal peptide; it reads MKATIILLLLAQVSWA. Positions 17 to 30 are excised as a propeptide; that stretch reads GPFQQRGLFDFMLE. S34 carries an O-linked (Xyl...) (glycosaminoglycan) serine glycan. Disulfide bonds link C54–C60 and C58–C67. 12 LRR repeats span residues 73–93, 94–117, 118–141, 142–162, 163–186, 187–212, 213–233, 234–257, 258–281, 282–304, 305–334, and 335–359; these read DKVP…NNKI, TEIK…NNKI, SKVS…KNQL, KELP…ENEI, TKVR…TNPL, KSSG…DTNI, TSIP…GNKI, SRVD…FNSI, SAVD…NNKL, TRVP…NNNI, SVVG…SNPV, and QYWE…GNYK. The N-linked (GlcNAc...) asparagine glycan is linked to N211. 2 N-linked (GlcNAc...) asparagine glycosylation sites follow: N262 and N303. Cysteines 313 and 346 form a disulfide.

The protein belongs to the small leucine-rich proteoglycan (SLRP) family. SLRP class I subfamily. In terms of assembly, binds to type I and type II collagen, fibronectin and TGF-beta. Forms a ternary complex with MFAP2 and ELN. Interacts with DPT. The attached glycosaminoglycan chain can be either chondroitin sulfate or dermatan sulfate depending upon the tissue of origin. Detected in placenta (at protein level). Detected in cerebrospinal fluid, fibroblasts and urine (at protein level).

The protein localises to the secreted. The protein resides in the extracellular space. Its subcellular location is the extracellular matrix. In terms of biological role, may affect the rate of fibrils formation. The polypeptide is Decorin (DCN) (Homo sapiens (Human)).